Reading from the N-terminus, the 303-residue chain is ATP phosphoribosyltransferase (303 aa).

This sequence belongs to the ATP phosphoribosyltransferase family. Long subfamily. Mg(2+) is required as a cofactor.

The protein resides in the cytoplasm. It catalyses the reaction 1-(5-phospho-beta-D-ribosyl)-ATP + diphosphate = 5-phospho-alpha-D-ribose 1-diphosphate + ATP. It participates in amino-acid biosynthesis; L-histidine biosynthesis; L-histidine from 5-phospho-alpha-D-ribose 1-diphosphate: step 1/9. Feedback inhibited by histidine. Catalyzes the condensation of ATP and 5-phosphoribose 1-diphosphate to form N'-(5'-phosphoribosyl)-ATP (PR-ATP). Has a crucial role in the pathway because the rate of histidine biosynthesis seems to be controlled primarily by regulation of HisG enzymatic activity. In Haemophilus influenzae (strain 86-028NP), this protein is ATP phosphoribosyltransferase.